The primary structure comprises 356 residues: N-methyltransferase 4 (356 aa).

Residues 93–94 (QS), 128–136 (ILDIGCGFG), and 155–160 (TNSAEQ) contribute to the S-adenosyl-L-methionine site.

Belongs to the CFA/CMAS family. As to expression, expressed in stems, roots, flower buds and leaves.

Its function is as follows. Probable N-methyltransferase not involved in benzylisoquinoline metabolism. Shows no detectable activity with (s)-coclaurine, (R)- or (S)-reticuline, papaverine or (R,S)-tetrahydropapaverine. The sequence is that of N-methyltransferase 4 (NMT4) from Papaver somniferum (Opium poppy).